The primary structure comprises 96 residues: MRKYEIMYIIRPGVEEEAQKALVERFAGVLTNNGAEIINTKEWGKRRLAYEINDLREGFYMILNVNSNAEAINEFDRLAKINEDILRHIVVKEEEK.

Belongs to the bacterial ribosomal protein bS6 family.

Its function is as follows. Binds together with bS18 to 16S ribosomal RNA. This chain is Small ribosomal subunit protein bS6, found in Bacillus cereus (strain G9842).